Consider the following 308-residue polypeptide: Transmembrane and ubiquitin-like domain-containing protein 1 (308 aa).

Residues 11 to 31 (VTVLFALVLFFMVLMLAWVST) traverse the membrane as a helical segment. Residues 39 to 162 (THWIRPEPAQ…GLGDGTTAQS (124 aa)) form a disordered region. The span at 63 to 93 (PSQTLTNADPNSETVDSSDSTQSSREFQNAG) shows a compositional bias: polar residues. The segment covering 103 to 115 (SSSGSTVSTGGSV) has biased composition (low complexity). The span at 132–149 (PNFTVSSRDPQAGASSSL) shows a compositional bias: polar residues. In terms of domain architecture, Ubiquitin-like spans 169 to 242 (IHLRLKFLND…LHCHISQHAS (74 aa)). 2 consecutive transmembrane segments (helical) span residues 253 to 273 (VPLN…MLLW) and 283 to 303 (FTGT…AIAF).

The protein resides in the membrane. The protein localises to the cytoplasm. It is found in the nucleus. Functionally, may contribute to the regulation of translation during cell-cycle progression. May contribute to the regulation of cell proliferation. The membrane form is involved in sterol-regulated ubiquitination and degradation of HMG-CoA reductase HMGCR. May be involved in centrosome assembly. This Xenopus laevis (African clawed frog) protein is Transmembrane and ubiquitin-like domain-containing protein 1 (tmub1).